A 356-amino-acid chain; its full sequence is GTPase Obg (356 aa).

Residues 1–159 (MKFLDEAKVY…RWIWLRMKLI (159 aa)) enclose the Obg domain. Positions 160–327 (ADAGLVGLPN…ALRKLADVIS (168 aa)) constitute an OBG-type G domain. GTP is bound by residues 166 to 173 (GLPNAGKS), 191 to 195 (FTTLH), 212 to 215 (DIPG), 279 to 282 (NKID), and 308 to 310 (SGA). Mg(2+)-binding residues include serine 173 and threonine 193. The segment at 332–356 (SIKAKSTSDSAATEEPWAAPLPPQG) is disordered.

Belongs to the TRAFAC class OBG-HflX-like GTPase superfamily. OBG GTPase family. In terms of assembly, monomer. The cofactor is Mg(2+).

It localises to the cytoplasm. Its function is as follows. An essential GTPase which binds GTP, GDP and possibly (p)ppGpp with moderate affinity, with high nucleotide exchange rates and a fairly low GTP hydrolysis rate. Plays a role in control of the cell cycle, stress response, ribosome biogenesis and in those bacteria that undergo differentiation, in morphogenesis control. This chain is GTPase Obg, found in Bradyrhizobium sp. (strain BTAi1 / ATCC BAA-1182).